The primary structure comprises 413 residues: Probable elongation factor 1-gamma 2 (413 aa).

Positions 1–82 constitute a GST N-terminal domain; sequence MALVMHTYKG…YVSRKNGDNS (82 aa). The 129-residue stretch at 87–215 folds into the GST C-terminal domain; sequence SLIEYAHIEQ…AKQTEAVPPV (129 aa). The interval 207–260 is disordered; sequence KQTEAVPPVPTKKAPQPAKPKEEPKKAAPVAEAPKPAEEEEAPKPKAKNPLDLL. In terms of domain architecture, EF-1-gamma C-terminal spans 253-413; sequence AKNPLDLLPP…EALLDAKCFK (161 aa).

As to quaternary structure, EF-1 is composed of four subunits: alpha, beta, delta, and gamma.

Its function is as follows. Probably plays a role in anchoring the complex to other cellular components. The chain is Probable elongation factor 1-gamma 2 from Arabidopsis thaliana (Mouse-ear cress).